The following is a 372-amino-acid chain: N-methyl-L-tryptophan oxidase (372 aa).

Residue 4-34 coordinates FAD; the sequence is DLIIIGSGSVGAAAGYYATRAGLNVLMTDAH. Cysteine 308 carries the post-translational modification S-8alpha-FAD cysteine.

Belongs to the MSOX/MTOX family. MTOX subfamily. As to quaternary structure, monomer. The cofactor is FAD.

The enzyme catalyses N(alpha)-methyl-L-tryptophan + O2 + H2O = L-tryptophan + formaldehyde + H2O2. Catalyzes the oxidative demethylation of N-methyl-L-tryptophan. In Escherichia coli O157:H7, this protein is N-methyl-L-tryptophan oxidase.